Reading from the N-terminus, the 219-residue chain is Deoxyribose-phosphate aldolase (219 aa).

The Proton donor/acceptor role is filled by aspartate 88. Lysine 150 (schiff-base intermediate with acetaldehyde) is an active-site residue. Residue lysine 179 is the Proton donor/acceptor of the active site.

Belongs to the DeoC/FbaB aldolase family. DeoC type 1 subfamily.

It is found in the cytoplasm. The enzyme catalyses 2-deoxy-D-ribose 5-phosphate = D-glyceraldehyde 3-phosphate + acetaldehyde. The protein operates within carbohydrate degradation; 2-deoxy-D-ribose 1-phosphate degradation; D-glyceraldehyde 3-phosphate and acetaldehyde from 2-deoxy-alpha-D-ribose 1-phosphate: step 2/2. Functionally, catalyzes a reversible aldol reaction between acetaldehyde and D-glyceraldehyde 3-phosphate to generate 2-deoxy-D-ribose 5-phosphate. The protein is Deoxyribose-phosphate aldolase of Aquifex aeolicus (strain VF5).